A 983-amino-acid polypeptide reads, in one-letter code: Bifunctional glutamine synthetase adenylyltransferase/adenylyl-removing enzyme (983 aa).

The segment at 1 to 468 is adenylyl removase; sequence MTVENAKALF…KQYAALFEQA (468 aa). The adenylyl transferase stretch occupies residues 473 to 983; it reads AASGNLVFTG…FDKLVGHGAD (511 aa).

The protein belongs to the GlnE family. It depends on Mg(2+) as a cofactor.

It carries out the reaction [glutamine synthetase]-O(4)-(5'-adenylyl)-L-tyrosine + phosphate = [glutamine synthetase]-L-tyrosine + ADP. The catalysed reaction is [glutamine synthetase]-L-tyrosine + ATP = [glutamine synthetase]-O(4)-(5'-adenylyl)-L-tyrosine + diphosphate. Functionally, involved in the regulation of glutamine synthetase GlnA, a key enzyme in the process to assimilate ammonia. When cellular nitrogen levels are high, the C-terminal adenylyl transferase (AT) inactivates GlnA by covalent transfer of an adenylyl group from ATP to specific tyrosine residue of GlnA, thus reducing its activity. Conversely, when nitrogen levels are low, the N-terminal adenylyl removase (AR) activates GlnA by removing the adenylyl group by phosphorolysis, increasing its activity. The regulatory region of GlnE binds the signal transduction protein PII (GlnB) which indicates the nitrogen status of the cell. This is Bifunctional glutamine synthetase adenylyltransferase/adenylyl-removing enzyme from Brucella melitensis biotype 1 (strain ATCC 23456 / CCUG 17765 / NCTC 10094 / 16M).